A 382-amino-acid polypeptide reads, in one-letter code: MPINDQFPSGLRILVVDDDTSCLFILEKMLLRLMYQVTICSQADVALTILRERKDSFDLVLSDVHMPGMNGYNLLQQVGLLEMDLPVIMMSVDGRTTTVMTGINHGACDYLIKPIRPEELKNIWQHVVRRKCVMKKELRSSQALEDNKNSGSLETVVVSVSECSEESLMKCRNKKKKKKRSVDRDDNEDDLLLDPGNSKKSRVVWSIELHQQFVNAVNKLGIDKAVPKRILELMNVPGLSRENVASHLQKFRLYLKRLSGEASQSNDSESTKRYENIQALVSSGQLHPQTLAALFGQPIDNHHSASFGVWIPNDNLGRSQNEHFSVDVSSASNRPVSVAVHGLSSSANFRQRGDVNNNRIRQGYGSNVNEESWILERSSRQR.

The region spanning 12–128 (RILVVDDDTS…ELKNIWQHVV (117 aa)) is the Response regulatory domain. Asp-63 is subject to 4-aspartylphosphate. Basic residues predominate over residues 171-181 (CRNKKKKKKRS). Residues 171–193 (CRNKKKKKKRSVDRDDNEDDLLL) form a disordered region. The Nuclear localization signal motif lies at 199–202 (KKSR). Residues 202-252 (RVVWSIELHQQFVNAVNKLGIDKAVPKRILELMNVPGLSRENVASHLQKFR) constitute a DNA-binding region (myb-like GARP).

This sequence belongs to the ARR family. Type-B subfamily. As to quaternary structure, binds the target DNA as a monomer. Two-component system major event consists of a His-to-Asp phosphorelay between a sensor histidine kinase (HK) and a response regulator (RR). In plants, the His-to-Asp phosphorelay involves an additional intermediate named Histidine-containing phosphotransfer protein (HPt). This multistep phosphorelay consists of a His-Asp-His-Asp sequential transfer of a phosphate group between first a His and an Asp of the HK protein, followed by the transfer to a conserved His of the HPt protein and finally the transfer to an Asp in the receiver domain of the RR protein. Predominantly expressed in young leaf tissue.

Its subcellular location is the nucleus. In terms of biological role, transcriptional activator that binds specifically to the DNA sequence 5'-[AG]GATT-3'. Functions as a response regulator involved in His-to-Asp phosphorelay signal transduction system. Phosphorylation of the Asp residue in the receiver domain activates the ability of the protein to promote the transcription of target genes. Could directly activate some type-A response regulators in response to cytokinins. This Arabidopsis thaliana (Mouse-ear cress) protein is Two-component response regulator ARR14 (ARR14).